A 399-amino-acid polypeptide reads, in one-letter code: Developmentally-regulated G-protein 1 (399 aa).

The OBG-type G domain maps to 63–288 (GRVALIGFPS…LLARMWDEMG (226 aa)). GTP-binding positions include 69-76 (GFPSVGKS), 115-119 (DLPGI), and 246-249 (NKID). The 79-residue stretch at 288 to 366 (GLVRVYSKPQ…EDEDVVQIVK (79 aa)) folds into the TGS domain. Residues 367–399 (KKERDEGGRGRFKSHSNAPARIADREKKAPLKQ) form a disordered region. A compositionally biased stretch (basic and acidic residues) spans 388 to 399 (IADREKKAPLKQ).

This sequence belongs to the TRAFAC class OBG-HflX-like GTPase superfamily. OBG GTPase family. As to expression, expressed in actively growing tissues and reproductive organs. Mostly expressed in leaves, stems and siliques. Also present in flowers and flower buds, and, to a lower extent, in roots.

The protein localises to the cytoplasmic vesicle. The protein resides in the cytoplasm. Its function is as follows. Binds GDP and GTP, and has low GTPase activity. May interact with phosphatidic acid (PA). The protein is Developmentally-regulated G-protein 1 (DRG1) of Arabidopsis thaliana (Mouse-ear cress).